The sequence spans 73 residues: Large ribosomal subunit protein bL28 (73 aa).

The protein belongs to the bacterial ribosomal protein bL28 family.

The polypeptide is Large ribosomal subunit protein bL28 (Buchnera aphidicola subsp. Cinara cedri (strain Cc)).